Consider the following 173-residue polypeptide: Secreted RxLR effector protein RXLR-C12 (173 aa).

A signal peptide spans 1–18 (MLQFATAFLAISANVVMT). The RxLR-dEER motif lies at 41-55 (RRLRTHEIGTVPEER). N-linked (GlcNAc...) asparagine glycosylation is present at asparagine 155.

It belongs to the RxLR effector family.

It localises to the secreted. It is found in the host cytoplasm. The protein resides in the host nucleus. In terms of biological role, secreted effector that suppresses pattern-triggered immunity (PTI) in plant host. This chain is Secreted RxLR effector protein RXLR-C12, found in Plasmopara halstedii (Downy mildew of sunflower).